A 131-amino-acid chain; its full sequence is Large ribosomal subunit protein bL19 (131 aa).

Residues 1–11 (MEETMNNQEAP) are compositionally biased toward polar residues. A disordered region spans residues 1 to 20 (MEETMNNQEAPETSEEETVA).

The protein belongs to the bacterial ribosomal protein bL19 family.

In terms of biological role, this protein is located at the 30S-50S ribosomal subunit interface and may play a role in the structure and function of the aminoacyl-tRNA binding site. In Dehalococcoides mccartyi (strain ATCC BAA-2100 / JCM 16839 / KCTC 5957 / BAV1), this protein is Large ribosomal subunit protein bL19.